The sequence spans 447 residues: Argininosuccinate synthase (447 aa).

Residues 20 to 28 (AFSGGLDTS) and Ala46 each bind ATP. Tyr102 is a binding site for L-citrulline. Residues Gly132 and Thr134 each coordinate ATP. The L-aspartate site is built by Thr134, Asn138, and Asp139. Residue Asn138 participates in L-citrulline binding. Position 139 (Asp139) interacts with ATP. The L-citrulline site is built by Arg142 and Ser195. Asp197 provides a ligand contact to ATP. Residues Thr204, Glu206, and Glu283 each coordinate L-citrulline.

It belongs to the argininosuccinate synthase family. Type 2 subfamily. In terms of assembly, homotetramer.

The protein resides in the cytoplasm. It catalyses the reaction L-citrulline + L-aspartate + ATP = 2-(N(omega)-L-arginino)succinate + AMP + diphosphate + H(+). The protein operates within amino-acid biosynthesis; L-arginine biosynthesis; L-arginine from L-ornithine and carbamoyl phosphate: step 2/3. The protein is Argininosuccinate synthase of Neisseria gonorrhoeae (strain ATCC 700825 / FA 1090).